Here is an 895-residue protein sequence, read N- to C-terminus: Microsomal triglyceride transfer protein large subunit (895 aa).

The first 18 residues, 1-18 (MILLAVLFLCFFSSYSAS), serve as a signal peptide directing secretion. A Vitellogenin domain is found at 28 to 659 (LNNERLYKLT…VFQYLGKAGL (632 aa)). Cysteine 174 and cysteine 194 are joined by a disulfide.

Heterodimer; heterodimerizes with the protein disulfide isomerase (P4HB/PDI). Interacts with APOB. Interacts with PRAP1.

It is found in the endoplasmic reticulum. The protein localises to the golgi apparatus. The catalysed reaction is a 1,2-diacyl-sn-glycero-3-phosphocholine(in) = a 1,2-diacyl-sn-glycero-3-phosphocholine(out). It catalyses the reaction a 1,2-diacyl-sn-glycero-3-phosphoethanolamine(in) = a 1,2-diacyl-sn-glycero-3-phosphoethanolamine(out). It carries out the reaction a cholesterol ester(in) = a cholesterol ester(out). The enzyme catalyses a triacyl-sn-glycerol(in) = a triacyl-sn-glycerol(out). In terms of biological role, catalyzes the transport of triglyceride, cholesteryl ester, and phospholipid between phospholipid surfaces. Required for the assembly and secretion of plasma lipoproteins that contain apolipoprotein B. May be involved in regulating cholesteryl ester biosynthesis in cells that produce lipoproteins. This is Microsomal triglyceride transfer protein large subunit (MTTP) from Mesocricetus auratus (Golden hamster).